The following is a 247-amino-acid chain: Probable proteasome subunit alpha type-5 (247 aa).

Residue Thr55 is modified to Phosphothreonine.

Belongs to the peptidase T1A family. In terms of assembly, the 26S proteasome consists of a 20S proteasome core and two 19S regulatory subunits. The 20S proteasome core is composed of 28 subunits that are arranged in four stacked rings, resulting in a barrel-shaped structure. The two end rings are each formed by seven alpha subunits, and the two central rings are each formed by seven beta subunits. The catalytic chamber with the active sites is on the inside of the barrel.

The protein resides in the cytoplasm. It is found in the nucleus. Its function is as follows. The proteasome is a multicatalytic proteinase complex which is characterized by its ability to cleave peptides with Arg, Phe, Tyr, Leu, and Glu adjacent to the leaving group at neutral or slightly basic pH. The proteasome has an ATP-dependent proteolytic activity. This chain is Probable proteasome subunit alpha type-5 (pup2), found in Schizosaccharomyces pombe (strain 972 / ATCC 24843) (Fission yeast).